The primary structure comprises 356 residues: NADH-quinone oxidoreductase subunit H (356 aa).

A run of 9 helical transmembrane segments spans residues 17 to 37 (TGGI…LLLA), 51 to 71 (PNVV…KFVL), 83 to 103 (VVFI…WAVV), 116 to 136 (VGIL…IMGG), 162 to 182 (IGLI…STIV), 202 to 222 (LVLL…ALAE), 261 to 281 (IVLM…PGFP), 295 to 315 (LFLA…FAMA), and 334 to 354 (VFLP…VFGP).

The protein belongs to the complex I subunit 1 family. NDH-1 is composed of 14 different subunits. Subunits NuoA, H, J, K, L, M, N constitute the membrane sector of the complex.

The protein localises to the cell inner membrane. The catalysed reaction is a quinone + NADH + 5 H(+)(in) = a quinol + NAD(+) + 4 H(+)(out). In terms of biological role, NDH-1 shuttles electrons from NADH, via FMN and iron-sulfur (Fe-S) centers, to quinones in the respiratory chain. The immediate electron acceptor for the enzyme in this species is believed to be ubiquinone. Couples the redox reaction to proton translocation (for every two electrons transferred, four hydrogen ions are translocated across the cytoplasmic membrane), and thus conserves the redox energy in a proton gradient. This subunit may bind ubiquinone. The protein is NADH-quinone oxidoreductase subunit H of Caulobacter vibrioides (strain ATCC 19089 / CIP 103742 / CB 15) (Caulobacter crescentus).